The following is a 636-amino-acid chain: LEAF RUST 10 DISEASE-RESISTANCE LOCUS RECEPTOR-LIKE PROTEIN KINASE-like 1.5 (636 aa).

The first 26 residues, 1–26 (MSQPPWRCFSLLIFVLTIFSTKPSSA), serve as a signal peptide directing secretion. At 27–257 (STSCSSSFHC…NNKRVNHIAV (231 aa)) the chain is on the extracellular side. N-linked (GlcNAc...) asparagine glycosylation is found at Asn73, Asn102, Asn146, and Asn224. A helical membrane pass occupies residues 258–278 (LSLIFALTCLLLVFSVAVAIF). Residues 279–636 (RSRRASFLSS…RVADDDVAKN (358 aa)) lie on the Cytoplasmic side of the membrane. The 305-residue stretch at 324–628 (FDPKRKIGDG…LRRIRSHTRV (305 aa)) folds into the Protein kinase domain. ATP is bound by residues 330 to 338 (IGDGGFGSV) and Lys352. Asp458 serves as the catalytic Proton acceptor.

It belongs to the protein kinase superfamily. Ser/Thr protein kinase family.

The protein resides in the cell membrane. The enzyme catalyses L-seryl-[protein] + ATP = O-phospho-L-seryl-[protein] + ADP + H(+). It carries out the reaction L-threonyl-[protein] + ATP = O-phospho-L-threonyl-[protein] + ADP + H(+). In Arabidopsis thaliana (Mouse-ear cress), this protein is LEAF RUST 10 DISEASE-RESISTANCE LOCUS RECEPTOR-LIKE PROTEIN KINASE-like 1.5.